Here is a 1174-residue protein sequence, read N- to C-terminus: Tyrosine-protein phosphatase non-receptor type 21 (1174 aa).

Positions 23–308 (LVARIQLLNN…ARHKFYRLNQ (286 aa)) constitute an FERM domain. Over residues 396–423 (SAHSTNSLNNPQPYLQPSPMSSNPSITG) the composition is skewed to polar residues. The disordered stretch occupies residues 396 to 445 (SAHSTNSLNNPQPYLQPSPMSSNPSITGSDVMRPDYLPSHRHSAVIPPSY). A phosphoserine mark is found at serine 577, serine 589, serine 590, serine 637, and serine 673. Residues 673–692 (SQPSVFTERTQREGPEEAEG) are disordered. Residues 681 to 692 (RTQREGPEEAEG) show a composition bias toward basic and acidic residues. 2 positions are modified to phosphoserine: serine 710 and serine 711. 2 disordered regions span residues 711–745 (SEEE…DPPG) and 769–806 (KRMM…TSGR). Positions 712–722 (EEEEDEDFEEE) are enriched in acidic residues. Residues 796-805 (MSESDLTTSG) are compositionally biased toward polar residues. Phosphoserine occurs at positions 797, 799, and 804. A Tyrosine-protein phosphatase domain is found at 896–1167 (VFTEYERILK…TFVYRVLIQF (272 aa)). Substrate contacts are provided by residues glutamate 1067, 1108–1114 (CSAGVGR), and glutamine 1152. Cysteine 1108 (phosphocysteine intermediate) is an active-site residue.

It belongs to the protein-tyrosine phosphatase family. Non-receptor class subfamily.

It localises to the cytoplasm. The protein localises to the cytoskeleton. It carries out the reaction O-phospho-L-tyrosyl-[protein] + H2O = L-tyrosyl-[protein] + phosphate. This Homo sapiens (Human) protein is Tyrosine-protein phosphatase non-receptor type 21 (PTPN21).